Consider the following 491-residue polypeptide: MEMNPLLVCATVAIVFATTTIIRILFSSSSLPQMKWPSGPRKLPIIGNLHQLGDDVLHVALAKLAKVHGSVMTIWIGSWRPVIVISDIEKAWEVLVNKSADYGARDMPEITKIASASWHTISTSDAGSFWQNVRKGLQSGAMGPLNVAAQNQYQERDMKRLIKAMSDEAANNNGIVKPLDHIKKNTVRLLTRLIFGQAFDDNKFIESMHYEIEDIIRISGYARLAEAFYYAKYLPSHKKAEREAFLVKCRVEELVRPLLSSKPPTNSYLYFLLSQNFEEEVIIFCIFELYLLGVDSTSSTTTWALAYLIREQGAQEKLYQDIRMTLGDVDLVKIEDVNKLKYLQGVVKETMRMKPIAPLAIPHKTAKETTLMGTKVAKGTRIMVNLYALHHNQNIWPDPYKFMPERFLEGETGTAYNKAMEQSFLPFSAGMRICAGMDLGKLQFAFALANLVNAFKWSCVEEGKLPDMGEELSFVLLMKTPLEARIAGRNV.

The chain crosses the membrane as a helical span at residues 6–26 (LLVCATVAIVFATTTIIRILF). Residue Cys-434 participates in heme binding.

This sequence belongs to the cytochrome P450 family. Heme serves as cofactor. Expressed at low levels in roots.

Its subcellular location is the endoplasmic reticulum membrane. It localises to the microsome membrane. It catalyses the reaction (S)-tetrahydrocolumbamine + reduced [NADPH--hemoprotein reductase] + O2 = (S)-canadine + oxidized [NADPH--hemoprotein reductase] + 2 H2O + H(+). Its function is as follows. Involved in the last but one step of the biosynthesis of berberine, an antimicrobial benzylisoquinoline alkaloid. Converts (S)-tetrahydrocolumbamine (THC) to (S)-tetrahydroberberine (THB) also called (S)-canadine. This is (S)-canadine synthase (CYP719A1) from Coptis japonica (Japanese goldthread).